We begin with the raw amino-acid sequence, 522 residues long: Insulinoma-associated protein 1 (522 aa).

Residues 1–12 are compositionally biased toward basic residues; it reads MPRGFLVKRSKK. Residues 1–20 are SNAG domain; the sequence is MPRGFLVKRSKKSTPVSYRI. 2 disordered regions span residues 1 to 112 and 182 to 235; these read MPRG…SREH and AAEA…KPKA. The tract at residues 2–7 is required and sufficient for interaction with KDM1A; the sequence is PRGFLV. Residues 43-57 are necessary for interaction with CCND1; the sequence is PPAPGPGPVPGPLQP. A compositionally biased stretch (pro residues) spans 43–61; the sequence is PPAPGPGPVPGPLQPPPPT. 2 stretches are compositionally biased toward low complexity: residues 66 to 75 and 212 to 228; these read AALAAALACA and ASAA…AKAP. The segment at 277 to 297 adopts a C2H2-type 1; atypical zinc-finger fold; sequence FICQLCKEEYADPFALAQHKC. The segment at 305-327 adopts a C2H2-type 2 zinc-finger fold; the sequence is YRCPECAKVFSCPANLASHRRWH. The tract at residues 325–373 is disordered; the sequence is RWHKPRPAPAAARACEPETPARAEAREATGGGGSDRDTPSPGGVSESGS. The segment covering 339–351 has biased composition (basic and acidic residues); that stretch reads CEPETPARAEARE. 3 consecutive C2H2-type zinc fingers follow at residues 378–400, 453–476, and 481–504; these read YECH…LLAH, HLCP…RLLH, and FPCK…NKCH.

The protein belongs to the INSM1 family. Interacts (via the N-terminal region) with CCND1 (via cyclin N-terminal domain); the interaction competes with the binding of CCND1 to CDK4 during cell cycle progression and increases its transcriptional repressor activity. Interacts with HDAC3; the interaction increases its transcriptional repressor activity. Interacts (via the SNAG domain) with HDAC1. Interacts (via the SNAG domain) with HDAC2. Interacts (via the SNAG domain) with KDM1A. Interacts (via the SNAG domain) with RCOR1. Interacts with SORBS1.

It is found in the nucleus. Functionally, sequence-specific DNA-binding transcriptional regulator that plays a key role in neurogenesis and neuroendocrine cell differentiation during embryonic and/or fetal development. Binds to the consensus sequence 5'-[TG][TC][TC][TT][GA]GGG[CG]A-3' in target promoters. Acts as a transcriptional repressor of NEUROD1 and INS expression via its interaction with cyclin CCND1 in a cell cycle-independent manner. Negatively regulates skeletal muscle-specific gene expression in endocrine cells of the pituitary by inhibiting the Notch signaling pathway. Represses target gene transcription by recruiting chromatin-modifying factors, such as HDAC1, HDAC2, HDAC3, KDM1A and RCOR1 histone deacetylases. Binds to its own promoter, suggesting autoregulation as a self-control feedback mechanism. Competes with histone H3 for the same binding site on the histone demethylase complex formed by KDM1A and RCOR1, and thereby inhibits demethylation of histone H3 at 'Lys-4'. Promotes the generation and expansion of neuronal basal progenitor cells in the developing neocortex. Involved in the differentiation of endocrine cells of the developing anterior pituitary gland, of the pancreas and intestine, and of sympatho-adrenal cells in the peripheral nervous system. Promotes cell cycle signaling arrest and inhibition of cellular proliferation. In Bos taurus (Bovine), this protein is Insulinoma-associated protein 1 (INSM1).